Reading from the N-terminus, the 318-residue chain is Protein disulfide-isomerase MPD1 (318 aa).

The signal sequence occupies residues 1 to 21 (MLFLNIIKLLLGLFIMNEVKA). The 137-residue stretch at 22-158 (QNFYDSDPHI…SLSRIRSYVK (137 aa)) folds into the Thioredoxin domain. An N-linked (GlcNAc...) asparagine glycan is attached at N47. A disulfide bond links C59 and C62. Residue N307 is glycosylated (N-linked (GlcNAc...) asparagine). The short motif at 315-318 (HDEL) is the Prevents secretion from ER element.

Belongs to the protein disulfide isomerase family. As to quaternary structure, interacts with CNE1 and EPS1.

It localises to the endoplasmic reticulum lumen. The enzyme catalyses Catalyzes the rearrangement of -S-S- bonds in proteins.. Participates in the folding of proteins containing disulfide bonds. This chain is Protein disulfide-isomerase MPD1 (MPD1), found in Saccharomyces cerevisiae (strain ATCC 204508 / S288c) (Baker's yeast).